A 733-amino-acid polypeptide reads, in one-letter code: Catalase-peroxidase (733 aa).

The tract at residues 1-24 (MTDDSTCPVTGGADKQVTGRGQSY) is disordered. The segment at residues 96 to 219 (WHSAGTYRTL…LAAVQMGLIY (124 aa)) is a cross-link (tryptophyl-tyrosyl-methioninium (Trp-Tyr) (with M-245)). Residue H97 is the Proton acceptor of the active site. Positions 219-245 (YVNPEGPNGKPDPVAAAKDIRETFARM) form a cross-link, tryptophyl-tyrosyl-methioninium (Tyr-Met) (with W-96). H260 provides a ligand contact to heme b.

It belongs to the peroxidase family. Peroxidase/catalase subfamily. In terms of assembly, homodimer or homotetramer. The cofactor is heme b. In terms of processing, formation of the three residue Trp-Tyr-Met cross-link is important for the catalase, but not the peroxidase activity of the enzyme.

It carries out the reaction H2O2 + AH2 = A + 2 H2O. The enzyme catalyses 2 H2O2 = O2 + 2 H2O. Functionally, bifunctional enzyme with both catalase and broad-spectrum peroxidase activity. This Methanoregula boonei (strain DSM 21154 / JCM 14090 / 6A8) protein is Catalase-peroxidase.